Here is a 301-residue protein sequence, read N- to C-terminus: UstYa family oxidase phomYd (301 aa).

The tract at residues 1 to 26 (MEKFFSPSRHNYADLSPTDVPASEES) is disordered. A helical transmembrane segment spans residues 47-69 (VLVNRLLAASTVALVMVSLWLGW). Short sequence motifs (HXXHC) lie at residues 189 to 194 (THSVHC) and 218 to 222 (HTDHC). Asn275 carries an N-linked (GlcNAc...) asparagine glycan.

It belongs to the ustYa family.

It is found in the membrane. The protein operates within mycotoxin biosynthesis. UstYa family oxidase; part of the gene cluster that mediates the biosynthesis of the phomopsins, a group of hexapeptide mycotoxins which infects lupins and causes lupinosis disease in livestock. Within the pathway, phomYd catalyzes the desaturation of the Asp moiety into 2,3-dehydroaspartic acid (dAsp). The pathway starts with the processing of the precursor phomA by several endopeptidases including kexin proteases as well as the cluster-specific S41 family peptidase phomP1 and the oligopeptidase phomG to produce 10 identical copies of the hexapeptide Tyr-Val-Ile-Pro-Ile-Asp. After being excised from the precursor peptide, the core peptides are cyclized and modified post-translationally by enzymes encoded within the gene cluster. The timing and order of proteolysis of the phomA precursor and PTMs are still unknown. Two tyrosinase-like enzymes, phomQ1 and phomQ2, catalyze the chlorination and hydroxylation of Tyr, respectively. PhomYb, is proposed to be involved in the construction of the macrocyclic structure. The other 4 ustYa family proteins may be involved in PTMs that generate the unique structure of phomopsin A. PhomYa is required for the hydroxylation of C-beta of Tyr. PhomYc, phomYd, and phomYe are responsible for the biosynthesis of 2,3-dehydroisoleucine (dIle), 2,3-dehydroaspartic acid (dAsp), and 3,4-dehydroproline (dPro), respectively. While dIle formation by phomYc is indispensable for the installation of dAsp by phomYd, the order of the other PTMs have not been elucidated yet. Most of the biosynthetic enzymes likely have broad substrate specificity, and thus, there might be a metabolic grid from a precursor to phomopsin A. The enzyme(s) responsible for the biosynthesis of 3,4-dehydrovaline (dVal) have also not been identified yet. Finally, phomM acts as an S-adenosylmethionine-dependent alpha-N-methyltransferase that catalyzes two successive N-methylation reactions, converting N-desmethyl-phomopsin A to phomopsin A and phomopsin A further to an N,N-dimethylated congener called phomopsin E. This chain is UstYa family oxidase phomYd, found in Diaporthe leptostromiformis (Lupinosis disease fungus).